The sequence spans 69 residues: ATP synthase subunits region ORF 1 (69 aa).

The protein is ATP synthase subunits region ORF 1 of Fuscovulum blasticum (Rhodobacter blasticus).